A 356-amino-acid chain; its full sequence is Putative KilA-N domain-containing protein R878 (356 aa).

The span at 1-12 (MKVRKSNNKPLK) shows a compositional bias: basic residues. Positions 1–114 (MKVRKSNNKP…DDDGSDNNVY (114 aa)) are disordered. Residues 14 to 46 (SASFTSGTKTGSKSAKSVNSGSKSMKSTKSSSK) show a composition bias toward low complexity. Residues 66-114 (SDNDELSDNEISDNESSDDDEISDNESSDDDEISDNEISDDDGSDNNVY) show a composition bias toward acidic residues. A KilA-N domain is found at 130-239 (NYSKGKFGNF…VRIGFCMEEW (110 aa)).

The chain is Putative KilA-N domain-containing protein R878 from Acanthamoeba polyphaga (Amoeba).